Here is a 346-residue protein sequence, read N- to C-terminus: Leucine zipper protein 2 (346 aa).

The N-terminal stretch at 1-19 (MKFSPAHYLLPLLPALVLS) is a signal peptide. Residues 16–211 (LVLSTRQDYE…QMKAMKETVQ (196 aa)) are a coiled coil. Residue Asn133 is glycosylated (N-linked (GlcNAc...) asparagine). The tract at residues 164–192 (LRYGKKDLLFKAQQLTDLEQKLAVAKNEL) is leucine-zipper. A disordered region spans residues 225-346 (ALSLITSNPT…GMAAREEKIL (122 aa)). The span at 250-261 (AAAKSKPQQSAS) shows a compositional bias: low complexity. Residues 262–283 (GNNESSQVESTKEGSPSTTACD) show a composition bias toward polar residues. A glycan (N-linked (GlcNAc...) asparagine) is linked at Asn264. The span at 286-298 (DEGRTCSIKHKES) shows a compositional bias: basic and acidic residues. A glycan (N-linked (GlcNAc...) asparagine) is linked at Asn302.

Its subcellular location is the secreted. The chain is Leucine zipper protein 2 (LUZP2) from Pongo abelii (Sumatran orangutan).